A 414-amino-acid chain; its full sequence is WW domain-containing oxidoreductase (414 aa).

A disordered region spans residues M1–E23. Residue T12 is modified to Phosphothreonine. A Phosphoserine modification is found at S14. The region spanning D16–T49 is the WW 1 domain. Y33 bears the Phosphotyrosine mark. The Nuclear localization signal motif lies at G50 to V55. In terms of domain architecture, WW 2 spans G57–L90. The interval K125–G414 is interaction with MAPT. G131–G137 lines the NADP(+) pocket. The segment at C209 to G273 is mediates targeting to the mitochondria. Substrate is bound at residue S260. Y287 carries the phosphotyrosine; by TNK2 modification. Y293 functions as the Proton acceptor in the catalytic mechanism.

It belongs to the short-chain dehydrogenases/reductases (SDR) family. In terms of assembly, interacts with TP53, p73/TP73 and MAPK8. Interacts with MAPT/TAU, RUNX2 and HYAL2. Forms a ternary complex with TP53 and MDM2. Interacts with ERBB4, LITAF and WBP1. Interacts with DVL1, DVL2 and DVL3. May interact with FAM189B and SCOTIN. Interacts with TNK2. Interacts with TMEM207. Interacts (via WW domain) with VOPP1. Phosphorylated upon genotoxic stress. Phosphorylation of Tyr-33 regulates interaction with TP53, TP73 and MAPK8. May also regulate proapoptotic activity. Phosphorylation by TNK2 is associated with polyubiquitination and degradation. In terms of processing, ubiquitinated when phosphorylated by TNK2, leading to its degradation. In terms of tissue distribution, widely expressed. Strongly expressed in testis, prostate, and ovary. Overexpressed in cancer cell lines. Isoform 5 and isoform 6 may only be expressed in tumor cell lines.

The protein localises to the cytoplasm. The protein resides in the nucleus. Its subcellular location is the mitochondrion. It localises to the golgi apparatus. It is found in the lysosome. In terms of biological role, putative oxidoreductase. Acts as a tumor suppressor and plays a role in apoptosis. Required for normal bone development. May function synergistically with p53/TP53 to control genotoxic stress-induced cell death. Plays a role in TGFB1 signaling and TGFB1-mediated cell death. May also play a role in tumor necrosis factor (TNF)-mediated cell death. Inhibits Wnt signaling, probably by sequestering DVL2 in the cytoplasm. In Homo sapiens (Human), this protein is WW domain-containing oxidoreductase (WWOX).